We begin with the raw amino-acid sequence, 197 residues long: Nucleoid occlusion factor SlmA (197 aa).

One can recognise an HTH tetR-type domain in the interval 7–67 (INRREHILQC…GLIEFIEESL (61 aa)). The H-T-H motif DNA-binding region spans 30-49 (TTAKLASEVGVSEAALYRHF). Positions 109 to 136 (DALLGENERLRSRISNLFAKIETQLKQI) form a coiled coil.

This sequence belongs to the nucleoid occlusion factor SlmA family. In terms of assembly, homodimer. Interacts with FtsZ.

The protein localises to the cytoplasm. It localises to the nucleoid. Its function is as follows. Required for nucleoid occlusion (NO) phenomenon, which prevents Z-ring formation and cell division over the nucleoid. Acts as a DNA-associated cell division inhibitor that binds simultaneously chromosomal DNA and FtsZ, and disrupts the assembly of FtsZ polymers. SlmA-DNA-binding sequences (SBS) are dispersed on non-Ter regions of the chromosome, preventing FtsZ polymerization at these regions. This Shewanella baltica (strain OS223) protein is Nucleoid occlusion factor SlmA.